The chain runs to 59 residues: Large ribosomal subunit protein bL32 (59 aa).

Residues 1–59 (MAVQQNKKSPSKRGMHRAHDFLTAPVIAIEPSTGEAHRRHHISPNGFYRGRKVVKGKDE) form a disordered region. Residues 49–59 (RGRKVVKGKDE) are compositionally biased toward basic residues.

Belongs to the bacterial ribosomal protein bL32 family.

This is Large ribosomal subunit protein bL32 from Laribacter hongkongensis (strain HLHK9).